A 124-amino-acid chain; its full sequence is Small ribosomal subunit protein uS12cz/uS12cy (124 aa).

Belongs to the universal ribosomal protein uS12 family. Part of the 30S ribosomal subunit.

Its subcellular location is the plastid. The protein localises to the chloroplast. Functionally, with S4 and S5 plays an important role in translational accuracy. Located at the interface of the 30S and 50S subunits. This chain is Small ribosomal subunit protein uS12cz/uS12cy (rps12-A), found in Zea mays (Maize).